The following is a 773-amino-acid chain: Elongin-A (773 aa).

One can recognise a TFIIS N-terminal domain in the interval 4 to 79 (ESALQVVEKL…AQWKKLVPVE (76 aa)). The segment covering 79-93 (ERNNEAEDQDFEKSN) has biased composition (basic and acidic residues). The interval 79 to 480 (ERNNEAEDQD…PRKVPTDVLP (402 aa)) is disordered. Positions 112–124 (YQESWQASGSQPY) are enriched in polar residues. The span at 136–156 (LPELERPHKVAHGHERRDERK) shows a compositional bias: basic and acidic residues. Low complexity predominate over residues 162-174 (SPPYSSDPESSDY). Ser195 carries the phosphoserine modification. The span at 239-248 (KPHKSSHKEK) shows a compositional bias: basic residues. 2 stretches are compositionally biased toward basic and acidic residues: residues 249 to 265 (RPVD…MGRE) and 271 to 304 (SSKE…EGNS). The residue at position 310 (Ser310) is a Phosphoserine. Basic and acidic residues-rich tracts occupy residues 317 to 339 (SDNH…KNKQ) and 368 to 380 (QEGK…DRKS). A phosphoserine mark is found at Ser380 and Ser383. At Lys430 the chain carries N6-acetyllysine. Ser515 carries the phosphoserine modification. Residues 521 to 680 (EAGFTGRRMN…PPRDVRRRQE (160 aa)) form an activation domain region. A BC-box region spans residues 549-558 (TLHQQCIRVL). In terms of domain architecture, F-box spans 565 to 609 (IFEVGGVPYSVLEPVLERCTPDQLYRIEECNHVLIEETDQLWKVH). The tract at residues 671–747 (PPRDVRRRQE…VASSSVSYDP (77 aa)) is disordered. The segment covering 704 to 718 (SSHVPASNSSSSFHS) has biased composition (low complexity). The segment covering 728-744 (PSTSSAHLAPVASSSVS) has biased composition (polar residues).

In terms of assembly, heterotrimer of an A (ELOA, ELOA2 or ELOA3P), ELOB and ELOC subunit. Part of a multisubunit ubiquitin ligase complex consisting of elongin BC complex (ELOB and ELOC), elongin A/ELOA, RBX1 and CUL5. Interacts with ERCC6; the interaction is induced by DNA damaging agents or inhibitors of RNA polymerase II elongation. Interacts (via BC-box) with CUL5.

The protein resides in the nucleus. In terms of biological role, SIII, also known as elongin, is a general transcription elongation factor that increases the RNA polymerase II transcription elongation past template-encoded arresting sites. Subunit A is transcriptionally active and its transcription activity is strongly enhanced by binding to the dimeric complex of the SIII regulatory subunits B and C (elongin BC complex). Functionally, as part of a multisubunit complex composed of elongin BC complex (ELOB and ELOC), elongin A/ELOA, RBX1 and CUL5; polyubiquitinates monoubiquitinated POLR2A. The polypeptide is Elongin-A (Eloa) (Rattus norvegicus (Rat)).